Consider the following 572-residue polypeptide: Mitochondrial distribution and morphology protein 34 (572 aa).

The 195-residue stretch at 1–195 folds into the SMP-LTD domain; it reads MAFNFNWSPL…LPAIIHRLSL (195 aa). 4 disordered regions span residues 208–236, 296–405, 455–518, and 551–572; these read LQTQTESANGEGPGQDPLASPPQDPVDAL, PSDQ…CSAP, RDTA…PFIN, and NACGPFWDRHSQEESPPPAYGH. Residues 296–347 are compositionally biased toward polar residues; sequence PSDQTDASGGVTSPFSPVLSRTQSQVGSMSSFPDSASMVSNQSRSSTPSHTF. Positions 358 to 370 are enriched in basic residues; the sequence is RHSKAHARKRKKR. Basic and acidic residues predominate over residues 371-381; that stretch reads VVDLRRPKTTD. Composition is skewed to polar residues over residues 387-401 and 498-511; these read SDESAFTESTSTPSI and ATGSSAGSSRQLPS.

It belongs to the MDM34 family. Component of the ER-mitochondria encounter structure (ERMES) or MDM complex, composed of mmm1, mdm10, mdm12 and mdm34.

It is found in the mitochondrion outer membrane. In terms of biological role, component of the ERMES/MDM complex, which serves as a molecular tether to connect the endoplasmic reticulum (ER) and mitochondria. Components of this complex are involved in the control of mitochondrial shape and protein biogenesis, and function in nonvesicular lipid trafficking between the ER and mitochondria. Mdm34 is required for the interaction of the ER-resident membrane protein mmm1 and the outer mitochondrial membrane-resident beta-barrel protein mdm10. This is Mitochondrial distribution and morphology protein 34 from Neosartorya fischeri (strain ATCC 1020 / DSM 3700 / CBS 544.65 / FGSC A1164 / JCM 1740 / NRRL 181 / WB 181) (Aspergillus fischerianus).